A 429-amino-acid polypeptide reads, in one-letter code: MEKQVIETVKAREIFDSRGNPTVEADVILSDGTLGRAEVPSGASTGEKEAVELRDGGDRLAGKGVLKAVNNVNTVINHALHGADPFNQAHIDQIMIDLDGTPNKARLGANAILGVSMATARAAANALQQPLYRYLGGTDLELPQTFHNVINGGEHADNGIDIQEFMITPVERTSFRDGFEKIVNTYHTLKKVIEDAGYTSGLGDEGGFAPDLKNSEEALQMLHDAIIKAGYTPGKEIAIAFDAAASYFYNRTTHNYDFEGKTYTPAALGDYYLQLLAKFPEIVSIEDPYGEEDWDNFASFTAAHGDQLQIVADDPVCTNPQLIRQAIQRGMANNILIKLNQIGTVTETLAAIRLARKNGYATMMSHRSGETGDTFVADFTVATNAAQLKAGAPARSERVEKYNQLLRIEEELGADGARLAHFPNNVMFD.

Residue Q163 coordinates (2R)-2-phosphoglycerate. The active-site Proton donor is the E205. Residues D242, E286, and D313 each contribute to the Mg(2+) site. Residues K338, R367, S368, and K389 each coordinate (2R)-2-phosphoglycerate. The active-site Proton acceptor is K338.

The protein belongs to the enolase family. It depends on Mg(2+) as a cofactor.

Its subcellular location is the cytoplasm. It localises to the secreted. The protein localises to the cell surface. The enzyme catalyses (2R)-2-phosphoglycerate = phosphoenolpyruvate + H2O. It functions in the pathway carbohydrate degradation; glycolysis; pyruvate from D-glyceraldehyde 3-phosphate: step 4/5. Functionally, catalyzes the reversible conversion of 2-phosphoglycerate (2-PG) into phosphoenolpyruvate (PEP). It is essential for the degradation of carbohydrates via glycolysis. The sequence is that of Enolase 2 from Lactiplantibacillus plantarum (strain ATCC BAA-793 / NCIMB 8826 / WCFS1) (Lactobacillus plantarum).